We begin with the raw amino-acid sequence, 930 residues long: Protein translocase subunit SecA (930 aa).

Residues Gln-87, 105 to 109 (GEGKT), and Asp-515 contribute to the ATP site. 4 residues coordinate Zn(2+): Cys-914, Cys-916, Cys-925, and His-926.

The protein belongs to the SecA family. In terms of assembly, monomer and homodimer. Part of the essential Sec protein translocation apparatus which comprises SecA, SecYEG and auxiliary proteins SecDF-YajC and YidC. It depends on Zn(2+) as a cofactor.

Its subcellular location is the cell inner membrane. It localises to the cytoplasm. The catalysed reaction is ATP + H2O + cellular proteinSide 1 = ADP + phosphate + cellular proteinSide 2.. Its function is as follows. Part of the Sec protein translocase complex. Interacts with the SecYEG preprotein conducting channel. Has a central role in coupling the hydrolysis of ATP to the transfer of proteins into and across the cell membrane, serving both as a receptor for the preprotein-SecB complex and as an ATP-driven molecular motor driving the stepwise translocation of polypeptide chains across the membrane. The protein is Protein translocase subunit SecA of Burkholderia vietnamiensis (strain G4 / LMG 22486) (Burkholderia cepacia (strain R1808)).